The sequence spans 71 residues: Translation initiation factor IF-1 (71 aa).

Residues 1-71 form the S1-like domain; it reads MAKQSAIEQD…LSKARITYRY (71 aa).

It belongs to the IF-1 family. Component of the 30S ribosomal translation pre-initiation complex which assembles on the 30S ribosome in the order IF-2 and IF-3, IF-1 and N-formylmethionyl-tRNA(fMet); mRNA recruitment can occur at any time during PIC assembly.

It localises to the cytoplasm. Functionally, one of the essential components for the initiation of protein synthesis. Stabilizes the binding of IF-2 and IF-3 on the 30S subunit to which N-formylmethionyl-tRNA(fMet) subsequently binds. Helps modulate mRNA selection, yielding the 30S pre-initiation complex (PIC). Upon addition of the 50S ribosomal subunit IF-1, IF-2 and IF-3 are released leaving the mature 70S translation initiation complex. The polypeptide is Translation initiation factor IF-1 (Flavobacterium psychrophilum (strain ATCC 49511 / DSM 21280 / CIP 103535 / JIP02/86)).